A 451-amino-acid polypeptide reads, in one-letter code: CBL-interacting protein kinase 10 (451 aa).

Positions 13 to 267 (YEIGKLLGQG…VSEIMEDPWF (255 aa)) constitute a Protein kinase domain. Residues 19 to 27 (LGQGSFAKV) and Lys42 contribute to the ATP site. Asp135 serves as the catalytic Proton acceptor. The activation loop stretch occupies residues 153–182 (DFGLSALAECKRQDGLLHTTCGTPAYVAPE). The NAF domain maps to 304–336 (INEGKQEAENLTSLNAFDIISLSSGFDLSAMFE). A PPI region spans residues 341 to 370 (KEESKFTSTNTATTITKKLEDVAKNLRLKF).

The protein belongs to the protein kinase superfamily. CAMK Ser/Thr protein kinase family. SNF1 subfamily. It depends on Mn(2+) as a cofactor.

It carries out the reaction L-seryl-[protein] + ATP = O-phospho-L-seryl-[protein] + ADP + H(+). It catalyses the reaction L-threonyl-[protein] + ATP = O-phospho-L-threonyl-[protein] + ADP + H(+). In terms of biological role, CIPK serine-threonine protein kinases interact with CBL proteins. Binding of a CBL protein to the regulatory NAF domain of CIPK protein lead to the activation of the kinase in a calcium-dependent manner. This chain is CBL-interacting protein kinase 10 (CIPK10), found in Oryza sativa subsp. japonica (Rice).